We begin with the raw amino-acid sequence, 593 residues long: Putative auxin response factor 15 (593 aa).

Positions 126 to 228 (FTKVLTASDI…ELRVGIRRAR (103 aa)) form a DNA-binding region, TF-B3. Residues 511 to 592 (RTCTKVQMQG…MVKRIYIQKR (82 aa)) form the PB1 domain.

This sequence belongs to the ARF family. In terms of assembly, homodimers and heterodimers.

It localises to the nucleus. Its function is as follows. Auxin response factors (ARFs) are transcriptional factors that bind specifically to the DNA sequence 5'-TGTCTC-3' found in the auxin-responsive promoter elements (AuxREs). Could act as transcriptional activator or repressor. Formation of heterodimers with Aux/IAA proteins may alter their ability to modulate early auxin response genes expression. The chain is Putative auxin response factor 15 (ARF15) from Arabidopsis thaliana (Mouse-ear cress).